The primary structure comprises 421 residues: Enolase (421 aa).

The active-site Proton donor is the Glu-207. 3 residues coordinate Mg(2+): Asp-244, Glu-285, and Asp-312. Catalysis depends on Lys-337, which acts as the Proton acceptor. Residues Lys-337, Arg-366, Ser-367, and Lys-388 each coordinate (2R)-2-phosphoglycerate.

Belongs to the enolase family. Mg(2+) is required as a cofactor.

Its subcellular location is the cytoplasm. It is found in the secreted. The protein resides in the cell surface. It carries out the reaction (2R)-2-phosphoglycerate = phosphoenolpyruvate + H2O. It participates in carbohydrate degradation; glycolysis; pyruvate from D-glyceraldehyde 3-phosphate: step 4/5. Its function is as follows. Catalyzes the reversible conversion of 2-phosphoglycerate (2-PG) into phosphoenolpyruvate (PEP). It is essential for the degradation of carbohydrates via glycolysis. The polypeptide is Enolase (Ehrlichia ruminantium (strain Gardel)).